The primary structure comprises 318 residues: Deoxyhypusine hydroxylase (318 aa).

HEAT-like PBS-type repeat units follow at residues 70–96 (LKHE…VLEN) and 103–129 (VRHE…YFKE). 8 residues coordinate Fe cation: His-72, Glu-73, His-105, Glu-106, His-231, Glu-232, His-264, and Glu-265. One copy of the HEAT-like PBS-type 3 repeat lies at 262–288 (VRHEAAEALGSIATDECLPVLQSFLND).

It belongs to the deoxyhypusine hydroxylase family. It depends on Fe(2+) as a cofactor.

It is found in the cytoplasm. Its subcellular location is the nucleus. The enzyme catalyses [eIF5A protein]-deoxyhypusine + AH2 + O2 = [eIF5A protein]-hypusine + A + H2O. Its pathway is protein modification; eIF5A hypusination. Catalyzes the hydroxylation of the N(6)-(4-aminobutyl)-L-lysine intermediate to form hypusine, an essential post-translational modification only found in mature eIF-5A factor. This Candida albicans (strain SC5314 / ATCC MYA-2876) (Yeast) protein is Deoxyhypusine hydroxylase.